The sequence spans 410 residues: Putative ribonuclease E (410 aa).

The region spanning 39–119 (SNIYKGKIVR…GTKGALLTTF (81 aa)) is the S1 motif domain. Mg(2+) contacts are provided by Asp-303 and Asp-346.

It belongs to the RNase E/G family. RNase E subfamily. As to quaternary structure, component of the RNA degradosome, which is a multiprotein complex involved in RNA processing and mRNA degradation. Within the RNA degradosome, RNase E assembles into a homotetramer formed by a dimer of dimers. It depends on Mg(2+) as a cofactor.

It localises to the cytoplasm. The protein localises to the cell inner membrane. The enzyme catalyses Endonucleolytic cleavage of single-stranded RNA in A- and U-rich regions.. In terms of biological role, endoribonuclease that plays a central role in RNA processing and decay. Required for the maturation of 5S and 16S rRNAs and the majority of tRNAs. Also involved in the degradation of most mRNAs. In Buchnera aphidicola subsp. Baizongia pistaciae (strain Bp), this protein is Putative ribonuclease E (rne).